The following is a 219-amino-acid chain: OVARIAN TUMOR DOMAIN-containing deubiquitinating enzyme 12 (219 aa).

Residues 79–203 (LCELKVSGDG…EVHYNSLYDI (125 aa)) form the OTU domain. The active site involves aspartate 87. Residue cysteine 90 is the Nucleophile of the active site. The active site involves histidine 196.

This sequence belongs to the peptidase C85 family.

It catalyses the reaction Thiol-dependent hydrolysis of ester, thioester, amide, peptide and isopeptide bonds formed by the C-terminal Gly of ubiquitin (a 76-residue protein attached to proteins as an intracellular targeting signal).. Functionally, hydrolase that can remove conjugated ubiquitin from proteins in vitro and may therefore play an important regulatory role at the level of protein turnover by preventing degradation. Inactive cysteine protease. The protein is OVARIAN TUMOR DOMAIN-containing deubiquitinating enzyme 12 of Arabidopsis thaliana (Mouse-ear cress).